The following is a 359-amino-acid chain: tRNA-specific 2-thiouridylase MnmA (359 aa).

ATP-binding positions include 6–13 (AMSGGVDS) and Leu32. Catalysis depends on Cys101, which acts as the Nucleophile. A disulfide bond links Cys101 and Cys193. Gly125 contributes to the ATP binding site. The segment at 143 to 145 (KDQ) is interaction with tRNA. Residue Cys193 is the Cysteine persulfide intermediate of the active site.

This sequence belongs to the MnmA/TRMU family.

The protein localises to the cytoplasm. The catalysed reaction is S-sulfanyl-L-cysteinyl-[protein] + uridine(34) in tRNA + AH2 + ATP = 2-thiouridine(34) in tRNA + L-cysteinyl-[protein] + A + AMP + diphosphate + H(+). Catalyzes the 2-thiolation of uridine at the wobble position (U34) of tRNA, leading to the formation of s(2)U34. The polypeptide is tRNA-specific 2-thiouridylase MnmA (Mycobacterium sp. (strain JLS)).